Here is a 23-residue protein sequence, read N- to C-terminus: Phospholipase A1 verutoxin-1 (23 aa).

It belongs to the AB hydrolase superfamily. Lipase family. Contains six disulfide bonds. As to expression, expressed by the venom gland.

The protein resides in the secreted. The catalysed reaction is a 1,2-diacyl-sn-glycero-3-phosphocholine + H2O = a 2-acyl-sn-glycero-3-phosphocholine + a fatty acid + H(+). It catalyses the reaction 1-(9Z-octadecenoyl)-2-hexadecanoyl-sn-glycero-3-phosphocholine + H2O = 2-hexadecanoyl-sn-glycero-3-phosphocholine + (9Z)-octadecenoate + H(+). The enzyme catalyses a 1-acyl-sn-glycero-3-phosphocholine + H2O = sn-glycerol 3-phosphocholine + a fatty acid + H(+). Its pathway is phospholipid metabolism. Its activity is regulated as follows. Activity is maximal in the presence of calcium. However, unlike phospholipases A2 whose catalytic activity is strictly calcium-dependent, this enzyme shows considerable catalytic activity on phosphatidylcholine emulsified in calcium free solution; the catalytic activity of VT-1 assayed in the absence of calcium ions is 18-20% of that assayed in solution containing calcium ions. Functionally, catalyzes the hydrolysis of glycerophospholipids such as phosphatidylcholine (1,2-diacyl-sn-glycero-3-phosphocholine) and has a moderate activity to hydrolyze lysoglycerophospholipids such as lysophosphatidylcholine (1-acyl-sn-glycero-3-phosphocholine), but is unable to hydrolyze sphingomyelin. Liberates the fatty acid from the sn-1 position of 1,2-diacyl-sn-glycero-3-phosphocholine mainly, indicating phospholipase activity of the A1 type. In addition to acting as an allergen, it possesses a moderate hemolytic activity on red blood cells of mice (3% of hemolysis at 3.0 ug/ml). The polypeptide is Phospholipase A1 verutoxin-1 (Vespa velutina (Asian yellow-legged hornet)).